Here is a 343-residue protein sequence, read N- to C-terminus: Heat-inducible transcription repressor HrcA (343 aa).

Belongs to the HrcA family.

Its function is as follows. Negative regulator of class I heat shock genes (grpE-dnaK-dnaJ and groELS operons). Prevents heat-shock induction of these operons. The protein is Heat-inducible transcription repressor HrcA of Clostridium acetobutylicum (strain ATCC 824 / DSM 792 / JCM 1419 / IAM 19013 / LMG 5710 / NBRC 13948 / NRRL B-527 / VKM B-1787 / 2291 / W).